Consider the following 428-residue polypeptide: Lysophosphatidic acid phosphatase type 6 (428 aa).

A mitochondrion-targeting transit peptide spans 1 to 32 (MITGVFSMRLWTPVGVLTSLAYCLHQRRVALA). Residues 58 to 168 (RHGARSPRKP…VFIRSTNIFR (111 aa)) are substrate binding. His-59 acts as the Nucleophile in catalysis. Asp-335 functions as the Proton donor in the catalytic mechanism.

The protein belongs to the histidine acid phosphatase family. Monomer.

It is found in the mitochondrion. The catalysed reaction is a phosphate monoester + H2O = an alcohol + phosphate. It catalyses the reaction 1-(9Z-octadecenoyl)-sn-glycero-3-phosphate + H2O = 1-(9Z-octadecenoyl)-sn-glycerol + phosphate. Hydrolyzes lysophosphatidic acid (LPA) containing a medium length fatty acid chain to the corresponding monoacylglycerol. Has highest activity with lysophosphatidic acid containing myristate (C14:0), monounsaturated oleate (C18:1) or palmitate (C16:0), and lower activity with C18:0 and C6:0 lysophosphatidic acid. The polypeptide is Lysophosphatidic acid phosphatase type 6 (ACP6) (Pongo abelii (Sumatran orangutan)).